We begin with the raw amino-acid sequence, 359 residues long: Membrane-bound lytic murein transglycosylase C (359 aa).

The N-terminal stretch at 1-16 is a signal peptide; the sequence is MKKYLALALIAPLLIS. The N-palmitoyl cysteine moiety is linked to residue C17. C17 carries S-diacylglycerol cysteine lipidation.

Belongs to the transglycosylase Slt family.

The protein localises to the cell outer membrane. The catalysed reaction is Exolytic cleavage of the (1-&gt;4)-beta-glycosidic linkage between N-acetylmuramic acid (MurNAc) and N-acetylglucosamine (GlcNAc) residues in peptidoglycan, from either the reducing or the non-reducing ends of the peptidoglycan chains, with concomitant formation of a 1,6-anhydrobond in the MurNAc residue.. Its function is as follows. Murein-degrading enzyme. May play a role in recycling of muropeptides during cell elongation and/or cell division. The sequence is that of Membrane-bound lytic murein transglycosylase C from Escherichia coli O157:H7.